A 364-amino-acid polypeptide reads, in one-letter code: GTPase Obg (364 aa).

The Obg domain maps to 1–159 (MKFVDEAYID…KSLKLELKVL (159 aa)). One can recognise an OBG-type G domain in the interval 160–334 (ADVGLLGMPN…LVKTIYQHVK (175 aa)). GTP-binding positions include 166 to 173 (GMPNAGKS), 191 to 195 (FTTLH), 213 to 216 (DLPG), 284 to 287 (NKLD), and 315 to 317 (SAL). Residues S173 and T193 each contribute to the Mg(2+) site. Residues 337 to 364 (QKSEQPEEEVDPRFIELPPEPAKPASSD) are disordered.

The protein belongs to the TRAFAC class OBG-HflX-like GTPase superfamily. OBG GTPase family. In terms of assembly, monomer. Mg(2+) is required as a cofactor.

It localises to the cytoplasm. Functionally, an essential GTPase which binds GTP, GDP and possibly (p)ppGpp with moderate affinity, with high nucleotide exchange rates and a fairly low GTP hydrolysis rate. Plays a role in control of the cell cycle, stress response, ribosome biogenesis and in those bacteria that undergo differentiation, in morphogenesis control. This Polaromonas naphthalenivorans (strain CJ2) protein is GTPase Obg.